A 222-amino-acid chain; its full sequence is DNA-directed RNA polymerase V subunit 5A (222 aa).

This sequence belongs to the archaeal Rpo5/eukaryotic RPB5 RNA polymerase subunit family. Component of the RNA polymerase V complex. Expressed in roots, leaves, siliques and seeds, and to a lower level, in flower buds and flowers.

Its subcellular location is the nucleus. In terms of biological role, DNA-dependent RNA polymerase catalyzes the transcription of DNA into RNA using the four ribonucleoside triphosphates as substrates. Component of RNA polymerase V involved in RNA-directed DNA methylation-dependent (RdDM) silencing of endogenous repeated sequences, including transposable elements. Required for establishment of DNA methylation. The polypeptide is DNA-directed RNA polymerase V subunit 5A (NRPE5A) (Arabidopsis thaliana (Mouse-ear cress)).